A 283-amino-acid polypeptide reads, in one-letter code: Pantothenate synthetase (283 aa).

30-37 (MGALHEGH) contributes to the ATP binding site. The active-site Proton donor is the histidine 37. Glutamine 61 is a binding site for (R)-pantoate. A beta-alanine-binding site is contributed by glutamine 61. 147–150 (GEKD) contacts ATP. Glutamine 153 contacts (R)-pantoate. Residues valine 176 and 184-187 (VSSR) each bind ATP.

This sequence belongs to the pantothenate synthetase family. Homodimer.

The protein resides in the cytoplasm. The catalysed reaction is (R)-pantoate + beta-alanine + ATP = (R)-pantothenate + AMP + diphosphate + H(+). It functions in the pathway cofactor biosynthesis; (R)-pantothenate biosynthesis; (R)-pantothenate from (R)-pantoate and beta-alanine: step 1/1. Its function is as follows. Catalyzes the condensation of pantoate with beta-alanine in an ATP-dependent reaction via a pantoyl-adenylate intermediate. This Chlorobium luteolum (strain DSM 273 / BCRC 81028 / 2530) (Pelodictyon luteolum) protein is Pantothenate synthetase.